A 501-amino-acid polypeptide reads, in one-letter code: Sucrose-6-phosphate hydrolase (501 aa).

Substrate contacts are provided by residues L44–D47, Q63, Y106–T107, R167–D168, and E222. D47 is a catalytic residue.

This sequence belongs to the glycosyl hydrolase 32 family.

The catalysed reaction is Hydrolysis of terminal non-reducing beta-D-fructofuranoside residues in beta-D-fructofuranosides.. Its pathway is glycan biosynthesis; sucrose metabolism. The polypeptide is Sucrose-6-phosphate hydrolase (scrB) (Pediococcus pentosaceus).